A 156-amino-acid polypeptide reads, in one-letter code: Small ribosomal subunit protein uS7 (156 aa).

It belongs to the universal ribosomal protein uS7 family. Part of the 30S ribosomal subunit. Contacts proteins S9 and S11.

In terms of biological role, one of the primary rRNA binding proteins, it binds directly to 16S rRNA where it nucleates assembly of the head domain of the 30S subunit. Is located at the subunit interface close to the decoding center, probably blocks exit of the E-site tRNA. This Shewanella sp. (strain MR-7) protein is Small ribosomal subunit protein uS7.